The sequence spans 142 residues: Large ribosomal subunit protein bL21 (142 aa).

Residues 74-84 (RRRQNSKRTRG) are compositionally biased toward basic residues. A disordered region spans residues 74–142 (RRRQNSKRTR…KAAAKAESAE (69 aa)). Residues 107-125 (KAAEKKAPKADAAEGEAAK) are compositionally biased toward basic and acidic residues. Positions 126–135 (PKKAAPKKAA) are enriched in basic residues.

The protein belongs to the bacterial ribosomal protein bL21 family. In terms of assembly, part of the 50S ribosomal subunit. Contacts protein L20.

This protein binds to 23S rRNA in the presence of protein L20. The polypeptide is Large ribosomal subunit protein bL21 (Brucella melitensis biotype 2 (strain ATCC 23457)).